Reading from the N-terminus, the 740-residue chain is NAD(P)H-quinone oxidoreductase subunit 5, chloroplastic (740 aa).

The next 16 helical transmembrane spans lie at 9–29 (WIIP…LFLF), 40–60 (WAFQ…YLSI), 89–109 (IDPL…MVLI), 125–145 (FAYM…SNLI), 147–167 (IYIF…FWFT), 185–205 (GDFG…SFEF), 219–239 (NEVD…GAVA), 258–278 (TPIS…FLVA), 286–306 (VIPY…LLGA), 327–347 (LGYM…FHLI), 354–374 (ALLF…VGYS), 396–416 (ITFL…CFWS), 425–445 (WLYS…TAFY), 543–563 (LFPI…GIPF), 602–622 (VLSV…YKPI), and 717–737 (SYLF…YLLF).

The protein belongs to the complex I subunit 5 family. In terms of assembly, NDH is composed of at least 16 different subunits, 5 of which are encoded in the nucleus.

The protein localises to the plastid. Its subcellular location is the chloroplast thylakoid membrane. The enzyme catalyses a plastoquinone + NADH + (n+1) H(+)(in) = a plastoquinol + NAD(+) + n H(+)(out). It catalyses the reaction a plastoquinone + NADPH + (n+1) H(+)(in) = a plastoquinol + NADP(+) + n H(+)(out). NDH shuttles electrons from NAD(P)H:plastoquinone, via FMN and iron-sulfur (Fe-S) centers, to quinones in the photosynthetic chain and possibly in a chloroplast respiratory chain. The immediate electron acceptor for the enzyme in this species is believed to be plastoquinone. Couples the redox reaction to proton translocation, and thus conserves the redox energy in a proton gradient. The sequence is that of NAD(P)H-quinone oxidoreductase subunit 5, chloroplastic (ndhF) from Nicotiana sylvestris (Wood tobacco).